Reading from the N-terminus, the 892-residue chain is Translation initiation factor IF-2 (892 aa).

Composition is skewed to basic and acidic residues over residues 93–159 (VKRD…KDKV) and 166–216 (DMTK…EENK). Residues 93–304 (VKRDPQEAER…SSLQQGFQKP (212 aa)) are disordered. Positions 254-269 (GRGRNAKAARPAKKGK) are enriched in basic residues. The span at 270–282 (HAESKADREEARA) shows a compositional bias: basic and acidic residues. The tr-type G domain occupies 391–560 (PRAPVVTIMG…LLQAEVLELK (170 aa)). The segment at 400–407 (GHVDHGKT) is G1. GTP is bound at residue 400 to 407 (GHVDHGKT). Positions 425–429 (GITQH) are G2. The interval 446–449 (DTPG) is G3. Residues 446–450 (DTPGH) and 500–503 (NKID) each bind GTP. Residues 500–503 (NKID) are G4. The G5 stretch occupies residues 536–538 (SAK).

The protein belongs to the TRAFAC class translation factor GTPase superfamily. Classic translation factor GTPase family. IF-2 subfamily.

It is found in the cytoplasm. Functionally, one of the essential components for the initiation of protein synthesis. Protects formylmethionyl-tRNA from spontaneous hydrolysis and promotes its binding to the 30S ribosomal subunits. Also involved in the hydrolysis of GTP during the formation of the 70S ribosomal complex. The chain is Translation initiation factor IF-2 from Salmonella gallinarum (strain 287/91 / NCTC 13346).